We begin with the raw amino-acid sequence, 947 residues long: Protein translocase subunit SecA (947 aa).

ATP is bound by residues glutamine 85, 103–107 (GEGKT), and aspartate 514. A disordered region spans residues 864–947 (AAPSLDKGAQ…QAKGGRRRKK (84 aa)). The span at 884–900 (PEIRAKGLDAPQRRDLH) shows a compositional bias: basic and acidic residues. Over residues 934 to 947 (ERRKQAKGGRRRKK) the composition is skewed to basic residues.

It belongs to the SecA family. As to quaternary structure, monomer and homodimer. Part of the essential Sec protein translocation apparatus which comprises SecA, SecYEG and auxiliary proteins SecDF. Other proteins may also be involved.

The protein localises to the cell membrane. The protein resides in the cytoplasm. It catalyses the reaction ATP + H2O + cellular proteinSide 1 = ADP + phosphate + cellular proteinSide 2.. Its function is as follows. Part of the Sec protein translocase complex. Interacts with the SecYEG preprotein conducting channel. Has a central role in coupling the hydrolysis of ATP to the transfer of proteins into and across the cell membrane, serving as an ATP-driven molecular motor driving the stepwise translocation of polypeptide chains across the membrane. The polypeptide is Protein translocase subunit SecA (Streptomyces lividans).